The sequence spans 277 residues: Shikimate dehydrogenase (NADP(+)) (277 aa).

Residues 15–17 (SKS) and threonine 64 contribute to the shikimate site. The active-site Proton acceptor is the lysine 68. 2 residues coordinate shikimate: asparagine 89 and aspartate 104. NADP(+) contacts are provided by residues 129–133 (GAGGA), 153–158 (NRTAKR), and methionine 217. Tyrosine 219 lines the shikimate pocket. Glycine 242 is a binding site for NADP(+).

This sequence belongs to the shikimate dehydrogenase family. Homodimer.

It carries out the reaction shikimate + NADP(+) = 3-dehydroshikimate + NADPH + H(+). It participates in metabolic intermediate biosynthesis; chorismate biosynthesis; chorismate from D-erythrose 4-phosphate and phosphoenolpyruvate: step 4/7. Functionally, involved in the biosynthesis of the chorismate, which leads to the biosynthesis of aromatic amino acids. Catalyzes the reversible NADPH linked reduction of 3-dehydroshikimate (DHSA) to yield shikimate (SA). The protein is Shikimate dehydrogenase (NADP(+)) of Hydrogenovibrio crunogenus (strain DSM 25203 / XCL-2) (Thiomicrospira crunogena).